Consider the following 157-residue polypeptide: Small ribosomal subunit protein uS7 (157 aa).

This sequence belongs to the universal ribosomal protein uS7 family. As to quaternary structure, part of the 30S ribosomal subunit. Contacts proteins S9 and S11.

One of the primary rRNA binding proteins, it binds directly to 16S rRNA where it nucleates assembly of the head domain of the 30S subunit. Is located at the subunit interface close to the decoding center, probably blocks exit of the E-site tRNA. This chain is Small ribosomal subunit protein uS7, found in Borrelia hermsii (strain HS1 / DAH).